The following is a 311-amino-acid chain: MPDKTYQPTIAGLRAFVAVAEKRQFSGAATALGVSQSTLSQVLAALEAGLGTQLVERSTRRVFLTPQGAELLPHAQAVVEAADAFTAAAAGSTDPLRAGMRLGLIPTVVPYVLPTVLAGIAERRPGLTLRVTEDQTERLLAVLREGALDAALIALPAETAGVTAIPIYDEDFVLALPPGHPLAGKRRVPATALADLPLLLLDEGHCLRDQALDVCHKAGVRAELANTRAASLATAVQCVTGGLGVTLIPQSAVPVEASRSRLGLAQFAAPRPGRRIGLVFRSSSGRDDSYRELAGLIGELISSQHQVRLVK.

Residues P8–T65 form the HTH lysR-type domain. Residues F25 to A44 constitute a DNA-binding region (H-T-H motif).

This sequence belongs to the LysR transcriptional regulatory family.

Its function is as follows. Required for the induction the katG gene for catalase. Involved in the response to hydrogen peroxide. The polypeptide is Probable hydrogen peroxide-inducible genes activator (oxyR) (Mycobacterium avium).